The following is a 124-amino-acid chain: Chemotaxis protein CheY1 (124 aa).

The Response regulatory domain maps to 2-120; sequence KLLVVDDSST…VLKEKLEVVL (119 aa). 4 residues coordinate Mg(2+): Asp-7, Asp-8, Asp-53, and Asn-55. The residue at position 53 (Asp-53) is a 4-aspartylphosphate.

In terms of assembly, interacts (when phosphorylated) with FliM. Mg(2+) serves as cofactor. Phosphorylated by CheAY. Dephosphorylated (inactivated) by CheZ.

Its subcellular location is the cytoplasm. Chemotactic response regulator protein that modulates the rotation direction of bacterial flagellar motors. Plays an important role in the colonization and infection of Helicobacter pylori. Upon phosphorylation by CheA, interacts with the flagellar motor protein FliM to cause clockwise flagellar rotation and bacterial reversals, as opposed to straight swimming when CheY1 is not phosphorylated. In Helicobacter pylori (strain ATCC 700392 / 26695) (Campylobacter pylori), this protein is Chemotaxis protein CheY1.